The primary structure comprises 232 residues: Vesicle transport through interaction with t-SNAREs homolog 1B (232 aa).

Ala-2 carries the post-translational modification N-acetylalanine. 2 interaction with CLINT1 regions span residues Ala-2–Glu-23 and Ala-69–Phe-73. Over Ala-2 to Leu-208 the chain is Cytoplasmic. Residues Thr-35–Thr-98 are a coiled coil. Position 103 is a phosphothreonine (Thr-103). Position 107 is an omega-N-methylarginine (Arg-107). The residue at position 138 (Ser-138) is a Phosphoserine. A coiled-coil region spans residues Ser-161–Met-198. Residues Leu-209–Phe-229 form a helical; Anchor for type IV membrane protein membrane-spanning segment. The Vesicular portion of the chain corresponds to Arg-230–His-232.

The protein belongs to the VTI1 family. In terms of assembly, forms a SNARE complex with STX7, STX8 and VAMP8 which functions in the homotypic fusion of late endosomes. Component of the SNARE complex composed of STX7, STX8, VAMP7 and VIT1B that is required for heterotypic fusion of late endosomes with lysosomes. May interact with STX17. Interacts with CLINT1. As to expression, expressed in all tissues examined.

The protein localises to the early endosome membrane. Its subcellular location is the late endosome membrane. The protein resides in the lysosome membrane. It localises to the cytoplasmic granule. It is found in the recycling endosome membrane. V-SNARE that mediates vesicle transport pathways through interactions with t-SNAREs on the target membrane. These interactions are proposed to mediate aspects of the specificity of vesicle trafficking and to promote fusion of the lipid bilayers. May be concerned with increased secretion of cytokines associated with cellular senescence. In Homo sapiens (Human), this protein is Vesicle transport through interaction with t-SNAREs homolog 1B (VTI1B).